Consider the following 159-residue polypeptide: UPF0756 membrane protein PTH_1668 (159 aa).

4 consecutive transmembrane segments (helical) span residues 15–37 (ILIT…SSCI), 61–81 (LGLV…KLTI), 117–137 (PEII…LRGT), and 138–158 (PCGP…ASLF).

Belongs to the UPF0756 family.

Its subcellular location is the cell membrane. The polypeptide is UPF0756 membrane protein PTH_1668 (Pelotomaculum thermopropionicum (strain DSM 13744 / JCM 10971 / SI)).